Consider the following 533-residue polypeptide: Calcium uptake protein 1 homolog, mitochondrial (533 aa).

The N-terminal 13 residues, 1 to 13 (MLRHNFRSSIFIR), are a transit peptide targeting the mitochondrion. Residues 127–147 (PFRPEASQKEESTDSGTEIEV) form a disordered region. EF-hand domains are found at residues 270 to 305 (TSHA…IMSQ), 337 to 358 (KDGK…LQHD), and 465 to 500 (LSDH…RMRR). Ca(2+)-binding residues include D283, D285, N287, and E294.

Belongs to the MICU1 family. MICU1 subfamily.

Its subcellular location is the mitochondrion intermembrane space. It localises to the mitochondrion inner membrane. Its function is as follows. Calcium sensor of the mitochondrial calcium uniporter (mcu-1) channel, which senses calcium level via its EF-hand domains. At low calcium levels, micu-1 occludes the pore of the mcu-1 channel, preventing mitochondrial calcium uptake. At higher calcium levels, calcium-binding to micu-1 induces a conformational change that weakens mcu-1-micu-1 interactions and moves micu-1 away from the pore, allowing calcium permeation through the mcu-1 channel. Also required to protect against manganese toxicity by preventing manganese uptake by mcu-1. Modulates the activity of the mitochondrial calcium uniporter protein mcu-1 depending on the level of intracellular calcium in PLM touch receptor neurons following axonal injury. In Caenorhabditis briggsae, this protein is Calcium uptake protein 1 homolog, mitochondrial.